Reading from the N-terminus, the 335-residue chain is Glyceraldehyde-3-phosphate dehydrogenase (335 aa).

NAD(+) contacts are provided by residues 10–11, Asp31, Arg75, and Thr122; that span reads RI. D-glyceraldehyde 3-phosphate is bound by residues 152 to 154 and Thr183; that span reads SCT. The active-site Nucleophile is Cys153. Residue Asn184 participates in NAD(+) binding. D-glyceraldehyde 3-phosphate contacts are provided by residues Arg198, 211 to 212, and Arg234; that span reads TG. Asn318 serves as a coordination point for NAD(+).

This sequence belongs to the glyceraldehyde-3-phosphate dehydrogenase family. As to quaternary structure, homotetramer.

It is found in the cytoplasm. The enzyme catalyses D-glyceraldehyde 3-phosphate + phosphate + NAD(+) = (2R)-3-phospho-glyceroyl phosphate + NADH + H(+). The protein operates within carbohydrate degradation; glycolysis; pyruvate from D-glyceraldehyde 3-phosphate: step 1/5. Its function is as follows. Catalyzes the oxidative phosphorylation of glyceraldehyde 3-phosphate (G3P) to 1,3-bisphosphoglycerate (BPG) using the cofactor NAD. The first reaction step involves the formation of a hemiacetal intermediate between G3P and a cysteine residue, and this hemiacetal intermediate is then oxidized to a thioester, with concomitant reduction of NAD to NADH. The reduced NADH is then exchanged with the second NAD, and the thioester is attacked by a nucleophilic inorganic phosphate to produce BPG. The polypeptide is Glyceraldehyde-3-phosphate dehydrogenase (gap) (Borreliella burgdorferi (strain ATCC 35210 / DSM 4680 / CIP 102532 / B31) (Borrelia burgdorferi)).